Here is a 404-residue protein sequence, read N- to C-terminus: Propionate kinase (404 aa).

Belongs to the acetokinase family. PduW subfamily.

It localises to the cytoplasm. The catalysed reaction is propanoate + ATP = propanoyl phosphate + ADP. It functions in the pathway polyol metabolism; 1,2-propanediol degradation. Functionally, works with phosphate acetyltransferase (pta) to capture exogenous propionate and regenerate propionyl-CoA during degradation of 1,2-propanediol (1,2-PD). The protein is Propionate kinase of Escherichia fergusonii (strain ATCC 35469 / DSM 13698 / CCUG 18766 / IAM 14443 / JCM 21226 / LMG 7866 / NBRC 102419 / NCTC 12128 / CDC 0568-73).